Consider the following 113-residue polypeptide: MSDANVPLSFSDVAANKVKTLIAEEENPELKLRVYITGGGCSGFQYGFTFDEKVNDGDMTIENSGVTLVVDPMSLQYLVGGIVDYTEGLEGSRFFVNNPNATTTCGCGASFSV.

The iron-sulfur cluster site is built by C41, C105, and C107.

It belongs to the HesB/IscA family. As to quaternary structure, homodimer. The cofactor is iron-sulfur cluster.

Its function is as follows. Required for insertion of 4Fe-4S clusters for at least IspG. The chain is Iron-sulfur cluster insertion protein ErpA from Photobacterium profundum (strain SS9).